Here is a 65-residue protein sequence, read N- to C-terminus: Ferredoxin soy (65 aa).

The region spanning 2-29 is the 4Fe-4S ferredoxin-type domain; that stretch reads GVQVDKERCVGAGMCALTAPDVFTQDDD. The [3Fe-4S] cluster site is built by Cys10, Cys16, and Cys55.

Requires [3Fe-4S] cluster as cofactor.

Electron transport protein for the cytochrome P-450-SOY system. The protein is Ferredoxin soy (soyB) of Streptomyces griseus.